Here is a 78-residue protein sequence, read N- to C-terminus: uncharacterized protein (78 aa).

The chain crosses the membrane as a helical span at residues 44–66 (ALYSLGFFLCTTIVIFSNIKFVV).

This sequence belongs to the TatC family.

The protein resides in the plastid. The protein localises to the chloroplast membrane. This is an uncharacterized protein from Dictyota dichotoma.